We begin with the raw amino-acid sequence, 440 residues long: tRNA modification GTPase MnmE (440 aa).

(6S)-5-formyl-5,6,7,8-tetrahydrofolate contacts are provided by R34, E94, and R134. The TrmE-type G domain occupies 229–367; that stretch reads GVRVVLAGPP…LVALLLDRAA (139 aa). N239 is a K(+) binding site. GTP-binding positions include 239–244, 258–264, 283–286, and 348–350; these read NAGKST, TPIAGTT, DTAG, and SAR. S243 contributes to the Mg(2+) binding site. Positions 258, 260, and 263 each coordinate K(+). A Mg(2+)-binding site is contributed by T264. Position 440 (K440) interacts with (6S)-5-formyl-5,6,7,8-tetrahydrofolate.

It belongs to the TRAFAC class TrmE-Era-EngA-EngB-Septin-like GTPase superfamily. TrmE GTPase family. Homodimer. Heterotetramer of two MnmE and two MnmG subunits. It depends on K(+) as a cofactor.

It is found in the cytoplasm. Functionally, exhibits a very high intrinsic GTPase hydrolysis rate. Involved in the addition of a carboxymethylaminomethyl (cmnm) group at the wobble position (U34) of certain tRNAs, forming tRNA-cmnm(5)s(2)U34. The sequence is that of tRNA modification GTPase MnmE from Rhizorhabdus wittichii (strain DSM 6014 / CCUG 31198 / JCM 15750 / NBRC 105917 / EY 4224 / RW1) (Sphingomonas wittichii).